Consider the following 148-residue polypeptide: Aspartate carbamoyltransferase regulatory chain (148 aa).

Cys106, Cys111, Cys134, and Cys137 together coordinate Zn(2+).

Belongs to the PyrI family. As to quaternary structure, contains catalytic and regulatory chains. Zn(2+) serves as cofactor.

Involved in allosteric regulation of aspartate carbamoyltransferase. In Methanococcus maripaludis (strain C5 / ATCC BAA-1333), this protein is Aspartate carbamoyltransferase regulatory chain.